An 872-amino-acid chain; its full sequence is Metabotropic glutamate receptor 2 (872 aa).

The N-terminal stretch at 1–18 is a signal peptide; the sequence is MESLLGFLALLLLWGAVA. Residues 19–567 lie on the Extracellular side of the membrane; that stretch reads EGPAKKVLTL…QEYIRWGDAW (549 aa). Cys50 and Cys92 are disulfide-bonded. Residues Arg57, Arg61, Ser145, Ala166, and Thr168 each coordinate L-glutamate. 2 N-linked (GlcNAc...) asparagine glycosylation sites follow: Asn203 and Asn286. 7 cysteine pairs are disulfide-bonded: Cys234–Cys518, Cys355–Cys362, Cys400–Cys407, Cys500–Cys519, Cys504–Cys522, Cys525–Cys537, and Cys540–Cys553. Residue Asp295 participates in L-glutamate binding. N-linked (GlcNAc...) asparagine glycosylation occurs at Asn338. Position 377 (Lys377) interacts with L-glutamate. An N-linked (GlcNAc...) asparagine glycan is attached at Asn402. Residue Asn547 is glycosylated (N-linked (GlcNAc...) asparagine). Residues 568–590 traverse the membrane as a helical segment; sequence AVGPVTIACLGALATLFVLGVFV. At 591 to 604 the chain is on the cytoplasmic side; the sequence is RHNATPVVKASGRE. A helical membrane pass occupies residues 605-625; sequence LCYILLGGVFLCYCMTFVFIA. Over 626–636 the chain is Extracellular; sequence KPSTAVCTLRR. Cys632 and Cys721 are disulfide-bonded. A helical transmembrane segment spans residues 637-655; it reads LGLGTAFSVCYSALLTKTN. Topologically, residues 656–679 are cytoplasmic; it reads RIARIFGGAREGAQRPRFISPASQ. Residues 677 to 685 are important for interaction with HTR2A; the sequence is ASQVAICLA. The helical transmembrane segment at 680–700 threads the bilayer; the sequence is VAICLALISGQLLIVAAWLVV. The Extracellular portion of the chain corresponds to 701 to 725; it reads EAPGTGKETAPERREVVTLRCNHRD. The helical transmembrane segment at 726-747 threads the bilayer; it reads ASMLGSLAYNVLLIALCTLYAF. Residues 748 to 760 are Cytoplasmic-facing; the sequence is KTRKCPENFNEAK. Residues 761 to 783 traverse the membrane as a helical segment; sequence FIGFTMYTTCIIWLAFLPIFYVT. Topologically, residues 784–793 are extracellular; the sequence is SSDYRVQTTT. The helical transmembrane segment at 794-819 threads the bilayer; it reads MCVSVSLSGSVVLGCLFAPKLHIILF. Over 820–872 the chain is Cytoplasmic; sequence QPQKNVVSHRAPTSRFGSAAPRASANLGQGSGSQFVPTVCNGREVVDSTTSSL.

The protein belongs to the G-protein coupled receptor 3 family. In terms of assembly, forms heterodimers with GRM3 or GRM4. Interacts with GNAI1. Interacts with TAMALIN. Interacts with HTR2A. As to expression, is widely distributed in the CNS and prominent expression is seen in Golgi cells of the cerebellum and some particular neuronal cells in other brain regions.

The protein localises to the cell membrane. It localises to the synapse. Its subcellular location is the cell projection. The protein resides in the dendrite. Its function is as follows. Dimeric G protein-coupled receptor which is activated by the excitatory neurotransmitter L-glutamate. Plays critical roles in modulating synaptic transmission and neuronal excitability. Upon activation by glutamate, inhibits presynaptic calcium channels, reducing further glutamate release and dampening excitatory signaling. Mechanistically, ligand binding causes a conformation change that triggers signaling via guanine nucleotide-binding proteins (G proteins) and modulates the activity of down-stream effectors, such as adenylate cyclase. May mediate suppression of neurotransmission or may be involved in synaptogenesis or synaptic stabilization. This chain is Metabotropic glutamate receptor 2 (Grm2), found in Rattus norvegicus (Rat).